The primary structure comprises 307 residues: Protein ORANGE, chloroplastic (307 aa).

Residues 1–55 (MSSLGRILSVSYPPDPYTWRFSQYKLSSSLGRNRRLRWRFTALDPESSSLDSESS) constitute a chloroplast transit peptide. A Glycyl lysine isopeptide (Lys-Gly) (interchain with G-Cter in ubiquitin) cross-link involves residue Lys-58. 2 helical membrane passes run 146 to 166 (VYYA…GLLA) and 199 to 219 (IVAS…VVEV). Residues 208–299 (VGVISALMVV…CTGMAMASEH (92 aa)) form a CR-type-like region. Residues 230-237 (CKYCLGTG) form a CXXCXGXG motif repeat. Residues 241 to 248 (CARCSSTG) form a CXXCXXXG motif repeat. The CXXCXGXG motif repeat unit spans residues 274–281 (CSNCSGAG). The stretch at 285 to 292 (CPTCLCTG) is one CXXCXXXG motif repeat.

This sequence belongs to the orange-like family. Interacts with the phytoene synthase PSY1 in chloroplast. Binds to the eukaryotic release factor eRF1-2. Interacts with the transcription factor TCP14 in the nucleus to repress chloroplast biogenesis in etiolated seedlings. Associates to the E2 ubiquitin-conjugating enzyme UBC19. Ubiquitination at K-58 by UBC19 is essential for nuclear localization.

The protein resides in the plastid. Its subcellular location is the chloroplast membrane. It localises to the nucleus. It is found in the cytoplasm. Functionally, involved in chromoplast differentiation. Associated with a cellular process that triggers the differentiation of pro-plastids or other non-colored plastids into chromoplasts for carotenoid accumulation. Is associated with carotenoid accumulation in chromoplasts. Functions as a major regulator of the phytoene synthase PSY1 protein level and activity. Modulates carotenoid biosynthesis by means of post-transcriptional regulation of PSY1. Modulates carotenoid biosynthesis in part by up-regulating a series of endogenous carotenogenic genes. Regulates cell elongation in the petiole in an eRF1-2-dependent manner. Binds to and represses TCP14 transactivation activity, thus preventing early light-induced proteins (ELIPs, e.g. ELIP1 and ELIP2) expression and delaying chloroplast biogenesis (e.g. lower chlorophyll biosynthesis and slower development of thylakoid membranes) in germinating cotyledons and etiolated seedlings; reduced levels upon illumination combined to TCP14 accumulation derepress chloroplast biogenesis during deetiolation. The sequence is that of Protein ORANGE, chloroplastic from Arabidopsis thaliana (Mouse-ear cress).